Reading from the N-terminus, the 305-residue chain is MIKQRTLKRIVQATGVGLHTGKKVTLTMRPAPANTGVIYRRTDLNPPVDFPADAKSVRDTMLCTCLVNEDDVRISTVEHLNAALAGLGIDNIVIEVDAPEIPIMDGSAAPFVFLLLDAGIEELRTAKKFIRIKETVRVEDGDKWAEMRPYNGFKLDFTIDFNHPAIDASTQRYKLDFSAESFMSQISRARTFGFMRDIEYLQSKGLCLGGSFDCAIVVDDYRVLNDDGLRFEDEFVRHKMLDAIGDLFMCGYNIIGEFTAFKSGHALNNKLLQAVLAKESAWEFVTFEDEAKMPVAFKAPSTVFA.

Zn(2+) contacts are provided by His-79, His-238, and Asp-242. The active-site Proton donor is the His-265.

This sequence belongs to the LpxC family. The cofactor is Zn(2+).

The catalysed reaction is a UDP-3-O-[(3R)-3-hydroxyacyl]-N-acetyl-alpha-D-glucosamine + H2O = a UDP-3-O-[(3R)-3-hydroxyacyl]-alpha-D-glucosamine + acetate. Its pathway is glycolipid biosynthesis; lipid IV(A) biosynthesis; lipid IV(A) from (3R)-3-hydroxytetradecanoyl-[acyl-carrier-protein] and UDP-N-acetyl-alpha-D-glucosamine: step 2/6. In terms of biological role, catalyzes the hydrolysis of UDP-3-O-myristoyl-N-acetylglucosamine to form UDP-3-O-myristoylglucosamine and acetate, the committed step in lipid A biosynthesis. The sequence is that of UDP-3-O-acyl-N-acetylglucosamine deacetylase from Proteus mirabilis (strain HI4320).